Here is a 424-residue protein sequence, read N- to C-terminus: UDP-N-acetylglucosamine 1-carboxyvinyltransferase (424 aa).

22–23 contributes to the phosphoenolpyruvate binding site; it reads KN. Residue arginine 93 coordinates UDP-N-acetyl-alpha-D-glucosamine. Residue cysteine 117 is the Proton donor of the active site. Position 117 is a 2-(S-cysteinyl)pyruvic acid O-phosphothioketal (cysteine 117). UDP-N-acetyl-alpha-D-glucosamine is bound by residues 122–126, 164–166, aspartate 307, and isoleucine 329; these read RPVDL and SVG.

This sequence belongs to the EPSP synthase family. MurA subfamily.

Its subcellular location is the cytoplasm. It catalyses the reaction phosphoenolpyruvate + UDP-N-acetyl-alpha-D-glucosamine = UDP-N-acetyl-3-O-(1-carboxyvinyl)-alpha-D-glucosamine + phosphate. The protein operates within cell wall biogenesis; peptidoglycan biosynthesis. In terms of biological role, cell wall formation. Adds enolpyruvyl to UDP-N-acetylglucosamine. This is UDP-N-acetylglucosamine 1-carboxyvinyltransferase from Haemophilus influenzae (strain ATCC 51907 / DSM 11121 / KW20 / Rd).